The chain runs to 462 residues: Cysteine--tRNA ligase (462 aa).

C30 serves as a coordination point for Zn(2+). Residues 32 to 42 (PTVYDRAHLGN) carry the 'HIGH' region motif. Residues C221, H246, and E250 each contribute to the Zn(2+) site. Positions 279–283 (KMSKS) match the 'KMSKS' region motif. K282 provides a ligand contact to ATP.

The protein belongs to the class-I aminoacyl-tRNA synthetase family. In terms of assembly, monomer. It depends on Zn(2+) as a cofactor.

Its subcellular location is the cytoplasm. It catalyses the reaction tRNA(Cys) + L-cysteine + ATP = L-cysteinyl-tRNA(Cys) + AMP + diphosphate. This chain is Cysteine--tRNA ligase, found in Paracoccus denitrificans (strain Pd 1222).